A 581-amino-acid chain; its full sequence is Sabinene synthase 1, chloroplastic (581 aa).

Residues 1-28 constitute a chloroplast transit peptide; that stretch reads MPLNSLHNLERKPSKAWSTSCTAPAARL. (2E)-geranyl diphosphate contacts are provided by Arg-297, Asp-334, Asp-338, Arg-475, and Asp-478. Asp-334 and Asp-338 together coordinate Mg(2+). Residues 334-338 carry the DDXXD motif motif; the sequence is DDVYD. Residues Asp-478, Thr-482, and Glu-486 each coordinate Mg(2+).

Belongs to the terpene synthase family. Tpsb subfamily. Mg(2+) is required as a cofactor. Mn(2+) serves as cofactor.

It localises to the plastid. The protein resides in the chloroplast. The enzyme catalyses (2E)-geranyl diphosphate = sabinene + diphosphate. It catalyses the reaction (2E)-geranyl diphosphate = beta-myrcene + diphosphate. Its pathway is secondary metabolite biosynthesis; terpenoid biosynthesis. Monoterpene synthase (TPS) involved in the biosynthesis of monoterpene natural products, components of the chemical defense arsenal. Catalyzes the conversion of (2E)-geranyl diphosphate (GPP) into sabinene, and, as minor products, myrcene. The protein is Sabinene synthase 1, chloroplastic of Salvia pomifera (Apple sage).